Consider the following 192-residue polypeptide: Adenylate kinase (192 aa).

12–17 (GSGKTT) provides a ligand contact to ATP. Residues 34 to 63 (STGDLLRAQVASGSELGKTIDSFISKGNLV) form an NMP region. Residues threonine 35, arginine 40, 61–63 (NLV), 88–91 (GYPR), and glutamine 95 contribute to the AMP site. The LID stretch occupies residues 130–136 (GRNRGAD). An ATP-binding site is contributed by arginine 131. Positions 133 and 145 each coordinate AMP. Arginine 173 contributes to the ATP binding site.

Belongs to the adenylate kinase family. Monomer.

The protein localises to the cytoplasm. It catalyses the reaction AMP + ATP = 2 ADP. It functions in the pathway purine metabolism; AMP biosynthesis via salvage pathway; AMP from ADP: step 1/1. Its function is as follows. Catalyzes the reversible transfer of the terminal phosphate group between ATP and AMP. Plays an important role in cellular energy homeostasis and in adenine nucleotide metabolism. The protein is Adenylate kinase of Campylobacter jejuni subsp. doylei (strain ATCC BAA-1458 / RM4099 / 269.97).